An 82-amino-acid polypeptide reads, in one-letter code: Small ribosomal subunit protein bS18A (82 aa).

It belongs to the bacterial ribosomal protein bS18 family. In terms of assembly, part of the 30S ribosomal subunit. Forms a tight heterodimer with protein bS6.

Its function is as follows. Binds as a heterodimer with protein bS6 to the central domain of the 16S rRNA, where it helps stabilize the platform of the 30S subunit. The polypeptide is Small ribosomal subunit protein bS18A (Streptomyces griseus subsp. griseus (strain JCM 4626 / CBS 651.72 / NBRC 13350 / KCC S-0626 / ISP 5235)).